A 318-amino-acid chain; its full sequence is MTAELVTFGETMIRLSPPEGERIETARSLEFRTAGAESNVAVAASRLGCSAAWLSKLPDSPLGRRVTTELRTHGVEPYVRWDDDARQGAYYIEQGRAPRPTNVIYDRADAAVTTARPDELAVDIVEDAAAFYTSGITPALSETLRETTGELLQTATEAGTTTAFDLNYRSKLWSPSDARDACESLFPKVDVLVAAERDIRAVLELDGDAPTLASELAGDFDFETVVVTRGEDGALARHGGTVYEQPVFETDTVDAIGTGDAFVGAFLSRLIAGEPVETALAYGAATAALKRTVHGDLAVVTPDEVERVLRGGDAGIDR.

Residues 35–39, tyrosine 90, 105–107, and arginine 169 each bind substrate; these read GAESN and YDR. ATP-binding positions include 167–169, 228–233, and 257–260; these read NYR, TRGEDG, and GTGD. Residues aspartate 260 and aspartate 296 each coordinate substrate. Aspartate 260 acts as the Proton acceptor in catalysis.

It belongs to the carbohydrate kinase PfkB family. In terms of assembly, homohexamer.

It carries out the reaction 2-dehydro-3-deoxy-D-galactonate + ATP = 2-dehydro-3-deoxy-6-phospho-D-galactonate + ADP + H(+). Involved in galactose catabolism. Catalyzes the phosphorylation of 2-keto-3-deoxygalactonate (KDGal) to produce 2-keto-3-deoxy-6-phosphogalactonate (KDPGal). Can also phosphorylate 2-keto-3-deoxygluconate (KDG) to 2-keto-3-deoxy-6-phosphogluconate (KDPG), but the catalytic efficiency for KDGal is 50-fold higher than for KDG. This Haloferax volcanii (strain ATCC 29605 / DSM 3757 / JCM 8879 / NBRC 14742 / NCIMB 2012 / VKM B-1768 / DS2) (Halobacterium volcanii) protein is 2-dehydro-3-deoxygalactonokinase.